Here is a 141-residue protein sequence, read N- to C-terminus: Relaxin-3 (141 aa).

A signal peptide spans 1 to 24 (MAMLGLLLLASWALLGALGLQAEA). Disulfide bonds link C34–C128, C46–C141, and C127–C132. Residues 54–117 (ADILAHESLG…GSPGVVRGSR (64 aa)) constitute a propeptide, connecting peptide.

It belongs to the insulin family. Heterodimer of a B chain and an A chain linked by two disulfide bonds. In terms of tissue distribution, high expression in the brain localized to the pons/medulla with highest levels in pars ventromedialis of the dorsal tegmental nucleus. Significant expression is also detected in the spleen, thymus, lung, testis and ovary.

The protein resides in the secreted. Its function is as follows. May play a role in neuropeptide signaling processes. Ligand for LGR7, relaxin-3 receptor-1 and relaxin-3 receptor-2. This Mus musculus (Mouse) protein is Relaxin-3 (Rln3).